A 127-amino-acid polypeptide reads, in one-letter code: MRAVAKYVRISPRKARLVADQIRGKSYPEAASILRFTNKRAARILGDVLKSAAANAENNHDADPELLFVEEVRVDEGPTIKRYRPRALGRATMIRKRTSHITLRLGAPEGVPVGGAVDTPGDEEEEE.

The segment covering 106-117 has biased composition (low complexity); sequence GAPEGVPVGGAV. Residues 106–127 are disordered; that stretch reads GAPEGVPVGGAVDTPGDEEEEE.

The protein belongs to the universal ribosomal protein uL22 family. Part of the 50S ribosomal subunit.

Functionally, this protein binds specifically to 23S rRNA; its binding is stimulated by other ribosomal proteins, e.g. L4, L17, and L20. It is important during the early stages of 50S assembly. It makes multiple contacts with different domains of the 23S rRNA in the assembled 50S subunit and ribosome. The globular domain of the protein is located near the polypeptide exit tunnel on the outside of the subunit, while an extended beta-hairpin is found that lines the wall of the exit tunnel in the center of the 70S ribosome. This is Large ribosomal subunit protein uL22 from Rubrobacter xylanophilus (strain DSM 9941 / JCM 11954 / NBRC 16129 / PRD-1).